We begin with the raw amino-acid sequence, 127 residues long: Large ribosomal subunit protein bL17 (127 aa).

The protein belongs to the bacterial ribosomal protein bL17 family. Part of the 50S ribosomal subunit. Contacts protein L32.

This chain is Large ribosomal subunit protein bL17, found in Xanthomonas campestris pv. campestris (strain 8004).